Here is a 424-residue protein sequence, read N- to C-terminus: Enolase (424 aa).

Gln-165 provides a ligand contact to (2R)-2-phosphoglycerate. Glu-207 (proton donor) is an active-site residue. Mg(2+) contacts are provided by Asp-244, Glu-283, and Asp-310. (2R)-2-phosphoglycerate is bound by residues Lys-335, Arg-364, Ser-365, and Lys-386. The active-site Proton acceptor is the Lys-335.

Belongs to the enolase family. It depends on Mg(2+) as a cofactor.

It localises to the cytoplasm. It is found in the secreted. Its subcellular location is the cell surface. It catalyses the reaction (2R)-2-phosphoglycerate = phosphoenolpyruvate + H2O. The protein operates within carbohydrate degradation; glycolysis; pyruvate from D-glyceraldehyde 3-phosphate: step 4/5. Its function is as follows. Catalyzes the reversible conversion of 2-phosphoglycerate (2-PG) into phosphoenolpyruvate (PEP). It is essential for the degradation of carbohydrates via glycolysis. In Chlamydia caviae (strain ATCC VR-813 / DSM 19441 / 03DC25 / GPIC) (Chlamydophila caviae), this protein is Enolase.